Reading from the N-terminus, the 293-residue chain is Protein nud-2 (293 aa).

The stretch at 36-147 (EIEKMMDSEL…EKIAMLESEL (112 aa)) forms a coiled coil. The required for interaction with unc-83 isoform c stretch occupies residues 239 to 293 (KSQRVSTGTGAGACINRIVKDLMTKVERLDSILSTIRVSNNSSNNNSSHLTTTRA).

Belongs to the nudE family. In terms of assembly, component of a dynein-regulating complex composed of at least lis-1 and nud-2. Interacts with lis-1; the interaction is direct. Interacts (via C-terminus) with unc-83; the interaction is direct, and is required for recruitment of nud-2 to the nuclear envelope. As to expression, expressed in ventral cord neurons, the pharynx, seam cells of the hypodermis and in vulval muscle cells.

Its subcellular location is the nucleus envelope. Functionally, part of a complex with lis-1, which is recruited to the nuclear envelope by unc-83, where, in turn, it recruits dynein to the nuclear surface and regulates nuclear migration in hypodermal precursor cells. Plays a role in GABAergic synaptic vesicle localization in the ventral nerve cord. This is Protein nud-2 from Caenorhabditis elegans.